A 247-amino-acid chain; its full sequence is ATP synthase subunit a, chloroplastic (247 aa).

5 consecutive transmembrane segments (helical) span residues 38-58 (QVLITSWVVIAILLGSSIIAV), 95-115 (VPFIGTMFLFIFVSNWSGALL), 134-154 (INTTVALALLTSVAYFYAGLT), 199-219 (LVVVVLVSLVPLVVPIPVMFL), and 220-240 (GLFTSGIQALIFATLAAAYIG).

The protein belongs to the ATPase A chain family. As to quaternary structure, F-type ATPases have 2 components, CF(1) - the catalytic core - and CF(0) - the membrane proton channel. CF(1) has five subunits: alpha(3), beta(3), gamma(1), delta(1), epsilon(1). CF(0) has four main subunits: a, b, b' and c.

It is found in the plastid. It localises to the chloroplast thylakoid membrane. In terms of biological role, key component of the proton channel; it plays a direct role in the translocation of protons across the membrane. This is ATP synthase subunit a, chloroplastic from Morus indica (Mulberry).